Here is a 94-residue protein sequence, read N- to C-terminus: uncharacterized protein (94 aa).

Functionally, could be a silencing control element for the regulation of the restriction system. This is an uncharacterized protein from Herpetosiphon aurantiacus (Herpetosiphon giganteus).